A 113-amino-acid chain; its full sequence is MHRDLHMMSDRSEDDGDTSILTATKPKTKRPPLYKVLLLNDDFTPMEFVVHVLERFFGLNHAQAFEIMLTVHKKGVAVVGVFSHEIAETKVAQVMDFARRHQHPLQCTMEKEE.

Residues 1–11 (MHRDLHMMSDR) show a composition bias toward basic and acidic residues. The tract at residues 1–25 (MHRDLHMMSDRSEDDGDTSILTATK) is disordered.

The protein belongs to the ClpS family. In terms of assembly, binds to the N-terminal domain of the chaperone ClpA.

In terms of biological role, involved in the modulation of the specificity of the ClpAP-mediated ATP-dependent protein degradation. The sequence is that of ATP-dependent Clp protease adapter protein ClpS from Roseobacter denitrificans (strain ATCC 33942 / OCh 114) (Erythrobacter sp. (strain OCh 114)).